The following is a 991-amino-acid chain: Integrator complex subunit 10-like protein (991 aa).

Disordered regions lie at residues 180–217 (NNNNNNNNNNNNNNNNKNNSNNNNKNNNNNNDDSNNNN), 310–345 (YFDEDDYDQKQQQQQQQQQQQQEQKGSKEDEEDIEK), 462–484 (NDYFDRNSEGNGGDENDENSQES), 549–614 (NSSS…GQQP), and 961–991 (EKQYSSSNTANNSGVNNSPIHNQNTDVEMNE). Low complexity predominate over residues 319–333 (KQQQQQQQQQQQQEQ). Over residues 473–484 (GGDENDENSQES) the composition is skewed to acidic residues. The span at 549 to 609 (NSSSGSNGII…NNNNNNNNNN (61 aa)) shows a compositional bias: low complexity. The span at 964–991 (YSSSNTANNSGVNNSPIHNQNTDVEMNE) shows a compositional bias: polar residues.

It localises to the nucleus. Functionally, may be a component of the Integrator complex, a complex involved in the small nuclear RNAs (snRNA) U1 and U2 transcription and in their 3'-box-dependent processing. The polypeptide is Integrator complex subunit 10-like protein (Dictyostelium discoideum (Social amoeba)).